A 327-amino-acid chain; its full sequence is Phenylalanine--tRNA ligase alpha subunit (327 aa).

Glutamate 252 serves as a coordination point for Mg(2+).

It belongs to the class-II aminoacyl-tRNA synthetase family. Phe-tRNA synthetase alpha subunit type 1 subfamily. In terms of assembly, tetramer of two alpha and two beta subunits. Mg(2+) serves as cofactor.

The protein localises to the cytoplasm. The catalysed reaction is tRNA(Phe) + L-phenylalanine + ATP = L-phenylalanyl-tRNA(Phe) + AMP + diphosphate + H(+). The sequence is that of Phenylalanine--tRNA ligase alpha subunit from Shewanella sp. (strain MR-7).